The following is a 188-amino-acid chain: UPF0398 protein BBR47_29830 (188 aa).

The protein belongs to the UPF0398 family.

This Brevibacillus brevis (strain 47 / JCM 6285 / NBRC 100599) protein is UPF0398 protein BBR47_29830.